The chain runs to 359 residues: Phospho-N-acetylmuramoyl-pentapeptide-transferase (359 aa).

A run of 10 helical transmembrane segments spans residues 27 to 47 (IYAL…MMRW), 73 to 93 (TMGG…WADL), 94 to 114 (TNIY…VGFV), 134 to 154 (LLGQ…QPAY), 166 to 186 (FTPD…IGAS), 197 to 217 (GLAI…IYIA), 233 to 253 (GVGE…GFLW), 261 to 281 (LFMG…IAVL), 286 to 306 (LLLI…IMQV), and 336 to 356 (KIVI…LSTL).

The protein belongs to the glycosyltransferase 4 family. MraY subfamily. It depends on Mg(2+) as a cofactor.

Its subcellular location is the cell inner membrane. The catalysed reaction is UDP-N-acetyl-alpha-D-muramoyl-L-alanyl-gamma-D-glutamyl-meso-2,6-diaminopimeloyl-D-alanyl-D-alanine + di-trans,octa-cis-undecaprenyl phosphate = di-trans,octa-cis-undecaprenyl diphospho-N-acetyl-alpha-D-muramoyl-L-alanyl-D-glutamyl-meso-2,6-diaminopimeloyl-D-alanyl-D-alanine + UMP. The protein operates within cell wall biogenesis; peptidoglycan biosynthesis. Functionally, catalyzes the initial step of the lipid cycle reactions in the biosynthesis of the cell wall peptidoglycan: transfers peptidoglycan precursor phospho-MurNAc-pentapeptide from UDP-MurNAc-pentapeptide onto the lipid carrier undecaprenyl phosphate, yielding undecaprenyl-pyrophosphoryl-MurNAc-pentapeptide, known as lipid I. This chain is Phospho-N-acetylmuramoyl-pentapeptide-transferase, found in Maridesulfovibrio salexigens (strain ATCC 14822 / DSM 2638 / NCIMB 8403 / VKM B-1763) (Desulfovibrio salexigens).